Reading from the N-terminus, the 313-residue chain is ADP-L-glycero-D-manno-heptose-6-epimerase (313 aa).

Residues 10–11 (MI), 31–32 (DN), K38, K53, 75–79 (EGACS), and N92 contribute to the NADP(+) site. Y139 acts as the Proton acceptor in catalysis. K143 lines the NADP(+) pocket. N174 contributes to the substrate binding site. The NADP(+) site is built by V175 and K183. The active-site Proton acceptor is the K183. Residues S185, H192, 206-209 (FEGS), R214, and Y277 contribute to the substrate site.

This sequence belongs to the NAD(P)-dependent epimerase/dehydratase family. HldD subfamily. Homopentamer. Requires NADP(+) as cofactor.

It catalyses the reaction ADP-D-glycero-beta-D-manno-heptose = ADP-L-glycero-beta-D-manno-heptose. Its pathway is nucleotide-sugar biosynthesis; ADP-L-glycero-beta-D-manno-heptose biosynthesis; ADP-L-glycero-beta-D-manno-heptose from D-glycero-beta-D-manno-heptose 7-phosphate: step 4/4. Catalyzes the interconversion between ADP-D-glycero-beta-D-manno-heptose and ADP-L-glycero-beta-D-manno-heptose via an epimerization at carbon 6 of the heptose. This Aliivibrio fischeri (strain MJ11) (Vibrio fischeri) protein is ADP-L-glycero-D-manno-heptose-6-epimerase.